A 397-amino-acid polypeptide reads, in one-letter code: Acetate kinase 2 (397 aa).

Asparagine 10 contacts Mg(2+). Lysine 17 lines the ATP pocket. Position 90 (arginine 90) interacts with substrate. Aspartate 147 serves as the catalytic Proton donor/acceptor. ATP-binding positions include 207 to 211 (HLGNG), 281 to 283 (DAR), and 329 to 333 (GIGEN). Glutamate 385 is a binding site for Mg(2+).

The protein belongs to the acetokinase family. In terms of assembly, homodimer. It depends on Mg(2+) as a cofactor. Mn(2+) is required as a cofactor.

Its subcellular location is the cytoplasm. It catalyses the reaction acetate + ATP = acetyl phosphate + ADP. Its pathway is metabolic intermediate biosynthesis; acetyl-CoA biosynthesis; acetyl-CoA from acetate: step 1/2. Its function is as follows. Catalyzes the formation of acetyl phosphate from acetate and ATP. Can also catalyze the reverse reaction. The protein is Acetate kinase 2 of Vibrio parahaemolyticus serotype O3:K6 (strain RIMD 2210633).